Here is a 360-residue protein sequence, read N- to C-terminus: DNA replication and repair protein RecF (360 aa).

30 to 37 (GENGAGKT) lines the ATP pocket.

Belongs to the RecF family.

It localises to the cytoplasm. In terms of biological role, the RecF protein is involved in DNA metabolism; it is required for DNA replication and normal SOS inducibility. RecF binds preferentially to single-stranded, linear DNA. It also seems to bind ATP. The protein is DNA replication and repair protein RecF of Deinococcus deserti (strain DSM 17065 / CIP 109153 / LMG 22923 / VCD115).